A 69-amino-acid polypeptide reads, in one-letter code: Sperm protamine P1 (69 aa).

Composition is skewed to basic residues over residues 1 to 30 and 37 to 69; these read MARF…RRGG and KITR…RRRN. Residues 1 to 69 form a disordered region; the sequence is MARFRPSRSR…SRRRRRRRRN (69 aa).

It belongs to the protamine P1 family. Testis.

Its subcellular location is the nucleus. It localises to the chromosome. Its function is as follows. Protamines substitute for histones in the chromatin of sperm during the haploid phase of spermatogenesis. They compact sperm DNA into a highly condensed, stable and inactive complex. The sequence is that of Sperm protamine P1 (PRM1) from Tachyglossus aculeatus aculeatus (Southeast Australian short-beaked echidna).